Consider the following 150-residue polypeptide: D-aminoacyl-tRNA deacylase (150 aa).

Positions 138-139 (GP) match the Gly-cisPro motif, important for rejection of L-amino acids motif.

The protein belongs to the DTD family. In terms of assembly, homodimer.

It is found in the cytoplasm. The catalysed reaction is glycyl-tRNA(Ala) + H2O = tRNA(Ala) + glycine + H(+). It carries out the reaction a D-aminoacyl-tRNA + H2O = a tRNA + a D-alpha-amino acid + H(+). Its function is as follows. An aminoacyl-tRNA editing enzyme that deacylates mischarged D-aminoacyl-tRNAs. Also deacylates mischarged glycyl-tRNA(Ala), protecting cells against glycine mischarging by AlaRS. Acts via tRNA-based rather than protein-based catalysis; rejects L-amino acids rather than detecting D-amino acids in the active site. By recycling D-aminoacyl-tRNA to D-amino acids and free tRNA molecules, this enzyme counteracts the toxicity associated with the formation of D-aminoacyl-tRNA entities in vivo and helps enforce protein L-homochirality. The polypeptide is D-aminoacyl-tRNA deacylase (Bacteroides thetaiotaomicron (strain ATCC 29148 / DSM 2079 / JCM 5827 / CCUG 10774 / NCTC 10582 / VPI-5482 / E50)).